The primary structure comprises 63 residues: uncharacterized protein (63 aa).

Positions 1-18 (MLNSEHFNLIQRALDATA) are cleaved as a signal peptide.

This is an uncharacterized protein from Bacillus subtilis (strain 168).